A 121-amino-acid polypeptide reads, in one-letter code: N-alpha-acetyltransferase 38, NatC auxiliary subunit (121 aa).

In terms of domain architecture, Sm spans 40–113 (PGRRKLQKWL…IVSLSIDEPD (74 aa)).

Belongs to the snRNP Sm proteins family. Component of the N-terminal acetyltransferase C (NatC) complex, which is composed of Naa35, Sbat/Naa38 and Naa30A. Interacts with Smn and Hez; along with Hez and Vlet, may form an accessory subcomplex involved in SMN complex function.

The protein resides in the cytoplasm. It localises to the nucleus. In terms of biological role, auxiliary component of the N-terminal acetyltransferase C (NatC) complex which catalyzes acetylation of N-terminal methionine residues. May have an accessory function in the survival motor neuron (SMN) complex. The protein is N-alpha-acetyltransferase 38, NatC auxiliary subunit of Drosophila melanogaster (Fruit fly).